Consider the following 346-residue polypeptide: Ephrin-B1 (346 aa).

The N-terminal stretch at 1–27 (MARPGQRWLGKWLVAMVVWALCRLATP) is a signal peptide. Residues 28-237 (LAKNLEPVSW…GDPDGFFNSK (210 aa)) lie on the Extracellular side of the membrane. Positions 30 to 164 (KNLEPVSWSS…TRTMKIIMKV (135 aa)) constitute an Ephrin RBD domain. Cystine bridges form between C64–C101 and C89–C153. N139 is a glycosylation site (N-linked (GlcNAc...) asparagine). The interval 169–228 (NAVTPEQLTTSRPSKEADNTVKMATQAPGSRGSLGDSDGKHETVNQEEKSGPGASGGSSG) is disordered. Basic and acidic residues predominate over residues 205-218 (SDGKHETVNQEEKS). The helical transmembrane segment at 238 to 258 (VALFAAVGAGCVIFLLIIIFL) threads the bilayer. Residues 259 to 346 (TVLLLKLRKR…QSPANIYYKV (88 aa)) lie on the Cytoplasmic side of the membrane. The short motif at 260–273 (VLLLKLRKRHRKHT) is the Nuclear localization signal element. The tract at residues 263-294 (LKLRKRHRKHTQQRAAALSLSTLASPKGGSGT) is interaction with ZHX2. Phosphoserine is present on residues S281 and S287. Residues 344 to 346 (YKV) carry the PDZ-binding motif.

This sequence belongs to the ephrin family. Interacts (via PDZ-binding motif) with GRIP1 and GRIP2 (via PDZ domain 6). Interacts with TLE1. The intracellular domain peptide interacts with ZHX2; the interaction enhances ZHX2 transcriptional repression activity. Post-translationally, inducible phosphorylation of tyrosine residues in the cytoplasmic domain. In terms of processing, proteolytically processed. The ectodomain is cleaved, probably by a metalloprotease, to produce a membrane-tethered C-terminal fragment. This fragment is then further processed by the gamma-secretase complex to yield a soluble intracellular domain peptide which can translocate to the nucleus. The intracellular domain peptide is highly labile suggesting that it is targeted for degradation by the proteasome. In terms of tissue distribution, widely expressed. Detected in both neuronal and non-neuronal tissues. Seems to have particularly strong expression in retina, sciatic nerve, heart and spinal cord.

The protein resides in the cell membrane. It is found in the membrane raft. The protein localises to the nucleus. Its function is as follows. Cell surface transmembrane ligand for Eph receptors, a family of receptor tyrosine kinases which are crucial for migration, repulsion and adhesion during neuronal, vascular and epithelial development. Binding to Eph receptors residing on adjacent cells leads to contact-dependent bidirectional signaling into neighboring cells. Shows high affinity for the receptor tyrosine kinase EPHB1/ELK. Can also bind EPHB2 and EPHB3. Binds to, and induces collapse of, commissural axons/growth cones in vitro. May play a role in constraining the orientation of longitudinally projecting axons. The protein is Ephrin-B1 (EFNB1) of Homo sapiens (Human).